The following is a 218-amino-acid chain: Probable GTP-binding protein EngB (218 aa).

In terms of domain architecture, EngB-type G spans Val31–Pro205. Residues Gly39–Ser46, Gly66–Leu70, Asp84–Gly87, Thr151–Asp154, and Phe184–Ser186 contribute to the GTP site. Mg(2+) is bound by residues Ser46 and Thr68.

The protein belongs to the TRAFAC class TrmE-Era-EngA-EngB-Septin-like GTPase superfamily. EngB GTPase family. Mg(2+) is required as a cofactor.

Necessary for normal cell division and for the maintenance of normal septation. This is Probable GTP-binding protein EngB from Shewanella loihica (strain ATCC BAA-1088 / PV-4).